A 968-amino-acid polypeptide reads, in one-letter code: RNA polymerase-associated protein RapA (968 aa).

Positions 163-332 (EVGQRFAPRV…FARLRLLDPD (170 aa)) constitute a Helicase ATP-binding domain. 176-183 (DEVGLGKT) is an ATP binding site. The DEAH box signature appears at 278-281 (DEAH). The Helicase C-terminal domain maps to 491–645 (RVDWLIDFLK…TCPTGHILFN (155 aa)).

Belongs to the SNF2/RAD54 helicase family. RapA subfamily. As to quaternary structure, interacts with the RNAP. Has a higher affinity for the core RNAP than for the holoenzyme. Its ATPase activity is stimulated by binding to RNAP.

Transcription regulator that activates transcription by stimulating RNA polymerase (RNAP) recycling in case of stress conditions such as supercoiled DNA or high salt concentrations. Probably acts by releasing the RNAP, when it is trapped or immobilized on tightly supercoiled DNA. Does not activate transcription on linear DNA. Probably not involved in DNA repair. This chain is RNA polymerase-associated protein RapA, found in Shewanella loihica (strain ATCC BAA-1088 / PV-4).